Reading from the N-terminus, the 767-residue chain is ABC transporter B family member 4 (767 aa).

Positions 81 to 104 (NYSSSSNSGNNNNNNYNNKNNNNN) are disordered. A run of 5 helical transmembrane segments spans residues 208 to 228 (IWLF…GLQI), 252 to 272 (AIFI…MISV), 324 to 344 (VSLG…LILI), 350 to 370 (LGMM…AGWL), and 429 to 449 (IGIF…LVYW). One can recognise an ABC transmembrane type-1 domain in the interval 211–491 (FGFGIITAFF…LSILFTQIMS (281 aa)). The ABC transporter domain occupies 524-760 (IKFINVDFKY…KGLYYKLVQR (237 aa)). 559–566 (GSSGGGKS) is an ATP binding site.

It belongs to the ABC transporter superfamily. ABCB family. Multidrug resistance exporter (TC 3.A.1.201) subfamily.

The protein resides in the membrane. In Dictyostelium discoideum (Social amoeba), this protein is ABC transporter B family member 4 (abcB4).